Here is a 469-residue protein sequence, read N- to C-terminus: Zinc transporter SLC39A7 (469 aa).

A helical transmembrane segment spans residues 10-30 (WVAVGLLTWATLGLLVAELGG). Basic and acidic residues-rich tracts occupy residues 42-56 (FHGHSHRHSHEDFHH) and 66-114 (HTHE…EHSR). Residues 42–121 (FHGHSHRHSH…HSRGGYGESG (80 aa)) form a disordered region. Histidine 66 carries the pros-methylhistidine modification. Transmembrane regions (helical) follow at residues 138–158 (ALGATVLISAAPFFVLFLIPV), 169–189 (LQILLSFASGGLLGDAFLHLI), and 214–234 (GPILSVGLWVLSGIVAFLVVE). Residues 242–263 (GGHGHSHGHGHAHSHTHGSHGH) are compositionally biased toward basic residues. Residues 242–310 (GGHGHSHGHG…VRPQNAEEEK (69 aa)) form a disordered region. Residues 264–285 (GRQECSTKEKQSSEEEEKETRG) are compositionally biased toward basic and acidic residues. Phosphoserine occurs at positions 275 and 276. The next 3 helical transmembrane spans lie at 386–406 (LTAVGALAGTACALLTEGGAV), 410–430 (IAGGAGPGWVLPFTAGGFIYV), and 448–468 (SLLEVLGLLGGVVMMVLIAHL).

It belongs to the ZIP transporter (TC 2.A.5) family. KE4/Catsup subfamily. As to quaternary structure, homodimer. In terms of processing, methylation at some His residue by METTL9 leads to reduced zinc-binding. Post-translationally, rapidly phosphorylated by CK2 following Zn(2+) treatment. This phosphorylation is required for efficient cytosolic Zn(2+) release.

Its subcellular location is the endoplasmic reticulum membrane. The protein resides in the golgi apparatus. The protein localises to the cis-Golgi network membrane. The catalysed reaction is Zn(2+)(in) = Zn(2+)(out). Its function is as follows. Transports Zn(2+) from the endoplasmic reticulum (ER)/Golgi apparatus to the cytosol, playing an essential role in the regulation of cytosolic zinc levels. Acts as a gatekeeper of zinc release from intracellular stores, requiring post-translational activation by phosphorylation, resulting in activation of multiple downstream pathways leading to cell growth and proliferation. Has an essential role in B cell development and is required for proper B cell receptor signaling. Plays an important role in maintaining intestinal epithelial homeostasis and skin dermis development by regulating ER function. Controls cell signaling pathways involved in glucose metabolism in skeletal muscle. Has a protective role against ER stress in different biological contexts. Mediates Zn(2+)-induced ferroptosis. This is Zinc transporter SLC39A7 from Pongo abelii (Sumatran orangutan).